Consider the following 376-residue polypeptide: Succinyl-diaminopimelate desuccinylase (376 aa).

His67 is a Zn(2+) binding site. Asp69 is a catalytic residue. Asp100 lines the Zn(2+) pocket. Glu134 (proton acceptor) is an active-site residue. Residues Glu135, Glu163, and His349 each contribute to the Zn(2+) site.

The protein belongs to the peptidase M20A family. DapE subfamily. In terms of assembly, homodimer. Zn(2+) is required as a cofactor. Co(2+) serves as cofactor.

The catalysed reaction is N-succinyl-(2S,6S)-2,6-diaminopimelate + H2O = (2S,6S)-2,6-diaminopimelate + succinate. Its pathway is amino-acid biosynthesis; L-lysine biosynthesis via DAP pathway; LL-2,6-diaminopimelate from (S)-tetrahydrodipicolinate (succinylase route): step 3/3. In terms of biological role, catalyzes the hydrolysis of N-succinyl-L,L-diaminopimelic acid (SDAP), forming succinate and LL-2,6-diaminopimelate (DAP), an intermediate involved in the bacterial biosynthesis of lysine and meso-diaminopimelic acid, an essential component of bacterial cell walls. This Xanthomonas campestris pv. campestris (strain B100) protein is Succinyl-diaminopimelate desuccinylase.